Consider the following 359-residue polypeptide: 4-hydroxy-3-methylbut-2-en-1-yl diphosphate synthase (flavodoxin) (359 aa).

C265, C268, C300, and E307 together coordinate [4Fe-4S] cluster.

It belongs to the IspG family. [4Fe-4S] cluster is required as a cofactor.

It carries out the reaction (2E)-4-hydroxy-3-methylbut-2-enyl diphosphate + oxidized [flavodoxin] + H2O + 2 H(+) = 2-C-methyl-D-erythritol 2,4-cyclic diphosphate + reduced [flavodoxin]. It functions in the pathway isoprenoid biosynthesis; isopentenyl diphosphate biosynthesis via DXP pathway; isopentenyl diphosphate from 1-deoxy-D-xylulose 5-phosphate: step 5/6. Converts 2C-methyl-D-erythritol 2,4-cyclodiphosphate (ME-2,4cPP) into 1-hydroxy-2-methyl-2-(E)-butenyl 4-diphosphate. The polypeptide is 4-hydroxy-3-methylbut-2-en-1-yl diphosphate synthase (flavodoxin) (Lawsonia intracellularis (strain PHE/MN1-00)).